A 190-amino-acid polypeptide reads, in one-letter code: Guanylate kinase (190 aa).

One can recognise a Guanylate kinase-like domain in the interval Gly8 to Leu188. Gly15–Ser22 provides a ligand contact to ATP.

It belongs to the guanylate kinase family.

It is found in the cytoplasm. The enzyme catalyses GMP + ATP = GDP + ADP. Its function is as follows. Essential for recycling GMP and indirectly, cGMP. The polypeptide is Guanylate kinase (Corynebacterium efficiens (strain DSM 44549 / YS-314 / AJ 12310 / JCM 11189 / NBRC 100395)).